The sequence spans 295 residues: Acetylglutamate kinase (295 aa).

Residues 66 to 67 (GG), R88, and N193 each bind substrate.

It belongs to the acetylglutamate kinase family. ArgB subfamily.

It is found in the cytoplasm. It carries out the reaction N-acetyl-L-glutamate + ATP = N-acetyl-L-glutamyl 5-phosphate + ADP. The protein operates within amino-acid biosynthesis; L-arginine biosynthesis; N(2)-acetyl-L-ornithine from L-glutamate: step 2/4. Functionally, catalyzes the ATP-dependent phosphorylation of N-acetyl-L-glutamate. This chain is Acetylglutamate kinase, found in Rhizobium etli (strain ATCC 51251 / DSM 11541 / JCM 21823 / NBRC 15573 / CFN 42).